The sequence spans 166 residues: Large ribosomal subunit protein uL10 (166 aa).

It belongs to the universal ribosomal protein uL10 family. In terms of assembly, part of the ribosomal stalk of the 50S ribosomal subunit. The N-terminus interacts with L11 and the large rRNA to form the base of the stalk. The C-terminus forms an elongated spine to which L12 dimers bind in a sequential fashion forming a multimeric L10(L12)X complex.

Functionally, forms part of the ribosomal stalk, playing a central role in the interaction of the ribosome with GTP-bound translation factors. In Streptococcus pneumoniae serotype 19F (strain G54), this protein is Large ribosomal subunit protein uL10.